A 765-amino-acid polypeptide reads, in one-letter code: 5-methyltetrahydropteroyltriglutamate--homocysteine methyltransferase 2 (765 aa).

Positions 18 and 116 each coordinate 5-methyltetrahydropteroyltri-L-glutamate. Residues Ile-437–Ser-439 and Glu-490 each bind L-homocysteine. L-methionine-binding positions include Ile-437–Ser-439 and Glu-490. 5-methyltetrahydropteroyltri-L-glutamate-binding positions include Asp-495, Tyr-518, Arg-521–Cys-522, and Trp-567. Asp-605 lines the L-homocysteine pocket. Asp-605 serves as a coordination point for L-methionine. Residues His-647, Cys-649, His-658, Asp-662, and Glu-671 each contribute to the Zn(2+) site. The active-site Proton donor is the His-701. Residue Cys-733 participates in Zn(2+) binding.

The protein belongs to the vitamin-B12 independent methionine synthase family. Zn(2+) is required as a cofactor. Expressed in leaves, stems and siliques.

It is found in the cytoplasm. It localises to the cytosol. It catalyses the reaction 5-methyltetrahydropteroyltri-L-glutamate + L-homocysteine = tetrahydropteroyltri-L-glutamate + L-methionine. Its pathway is amino-acid biosynthesis; L-methionine biosynthesis via de novo pathway; L-methionine from L-homocysteine (MetE route): step 1/1. Functionally, catalyzes the transfer of a methyl group from 5-methyltetrahydrofolate to homocysteine resulting in methionine formation. This chain is 5-methyltetrahydropteroyltriglutamate--homocysteine methyltransferase 2 (MS2), found in Arabidopsis thaliana (Mouse-ear cress).